A 1493-amino-acid chain; its full sequence is Protein RNA-directed DNA methylation 3 (1493 aa).

2 disordered regions span residues 1 to 34 and 54 to 96; these read MDRK…EGLR and GYYG…SSFV. The Nuclear localization signal motif lies at 21–28; it reads KRKNSVEF. The segment covering 24 to 34 has biased composition (basic and acidic residues); the sequence is NSVEFRDEGLR. Residues 60–80 are compositionally biased toward acidic residues; that stretch reads SDEDDDGLGFLNDMEDEPEVE. Residues 81 to 92 show a composition bias toward basic and acidic residues; the sequence is ESSKAGKGEKGK. Residues 239–266 enclose the KOW 1 domain; that stretch reads KVSEGTWARVKNGKYKGDLAQIVAVSDT. The disordered stretch occupies residues 393-432; sequence PTCREGGKGEGSGGGKGEGSGGGKGEGSRGGKGEGSSDFK. The span at 401–417 shows a compositional bias: gly residues; the sequence is GEGSGGGKGEGSGGGKG. Residues 418 to 432 show a composition bias toward basic and acidic residues; sequence EGSRGGKGEGSSDFK. Positions 501-528 constitute a KOW 2 domain; the sequence is QISVNDVVKISKGPSEGKQGVVRQVYRG. A disordered region spans residues 578 to 602; the sequence is SSPKSPLSPEKEWQPRERYNSSNQG. Positions 586–596 are enriched in basic and acidic residues; it reads PEKEWQPRERY. The 28-residue stretch at 607–634 folds into the KOW 3 domain; sequence TYSIGQKLRIRVGPLKGYLCRVIALRYS. Disordered regions lie at residues 692 to 711, 728 to 747, and 757 to 1493; these read IGAG…PSTD, EKNP…TVAD, and AAEN…KTGW. Repeat 1 spans residues 732 to 741; that stretch reads WGGSKPTSDV. The 42 X 9 AA approximate WG/GW-rich tandem repeats stretch occupies residues 732–1493; it reads WGGSKPTSDV…WGTGDKKTGW (762 aa). Over residues 757-767 the composition is skewed to low complexity; that stretch reads AAENKPASASD. Repeat copies occupy residues 775 to 784, 789 to 797, 818 to 827, 836 to 845, 854 to 863, 866 to 875, 883 to 892, 917 to 926, 935 to 943, 944 to 953, 954 to 962, 963 to 972, 978 to 987, 1003 to 1012, 1013 to 1022, 1023 to 1032, 1033 to 1042, 1043 to 1052, 1053 to 1062, 1063 to 1072, 1073 to 1082, 1132 to 1141, 1144 to 1153, 1156 to 1165, 1167 to 1176, 1180 to 1189, 1192 to 1201, 1204 to 1213, 1217 to 1226, 1229 to 1238, 1241 to 1250, 1253 to 1262, 1266 to 1275, 1278 to 1287, 1290 to 1299, 1302 to 1311, and 1314 to 1323. Residues 790-812 show a composition bias toward polar residues; the sequence is GDTSASNVEASSWEKQGASTSNV. Residues 846–860 are compositionally biased toward basic and acidic residues; sequence SQKKEESSWGKKGGS. A compositionally biased stretch (polar residues) spans 866 to 875; that stretch reads WGNKDGNSSA. Over residues 955-1090 the composition is skewed to basic and acidic residues; the sequence is GKKDDGGSWG…YSEQTFDRGG (136 aa). Residues 1122-1134 show a composition bias toward low complexity; the sequence is PWSKPSGGSSWGK. Polar residues predominate over residues 1156–1172; it reads WGKQDNGVGSSWGKQND. Gly residues predominate over residues 1186-1213; the sequence is AGGGSSWGKQDSGGDGSSWGKQDGGGDS. Positions 1218 to 1231 are enriched in polar residues; that stretch reads GKQNNTSGGSSWGK. The segment covering 1235 to 1264 has biased composition (gly residues); that stretch reads AGGGSSWGKQDGGGGGSSWGKQDGGGGSGS. The segment covering 1270 to 1283 has biased composition (polar residues); the sequence is NETSNGSSWGKQND. Residues 1284–1321 are compositionally biased toward gly residues; the sequence is SGGGSSWGKQDGGGGGSSWGKQNDGGGGSSWGKQGDGG. Composition is skewed to polar residues over residues 1366–1382 and 1392–1401; these read WKTD…QSGG and DSNNSKPSGS. Copy 39 of the repeat occupies 1389-1398; sequence WGEDSNNSKP. Residues 1416-1430 show a composition bias toward basic and acidic residues; sequence NSKKETNDKPGDDSK. Residues 1432 to 1442 are compositionally biased toward polar residues; it reads AWGTSNDQVNT. Repeat copies occupy residues 1433–1442, 1467–1475, and 1484–1493.

Interacts with AGO4 via its C-terminal region and with RNA transcripts. Binds chromatin at loci subject to transcriptional silencing downstream of RNA Polymerase V, but independently from the presence of 24-nt siRNA.

It localises to the nucleus. Its subcellular location is the nucleoplasm. Functionally, effector of RNA-directed DNA methylation (RdDM) triggered by small interfering RNAs (siRNAs, 24-nt RNAs). Functions as an adapter protein that binds scaffold transcripts generated by polymerase V and recruits AGO4 and AGO4-bound siRNAs to form an RdDM effector complex. Promotes the expression of 24-nt RNAs. Required for the initial establishment of DNA methylation. Together with AGO4, required for transcriptional gene silencing (TGS) by DNA methylation and repressive histone modifications (H3K9me2) of several chromatin loci. The polypeptide is Protein RNA-directed DNA methylation 3 (Arabidopsis thaliana (Mouse-ear cress)).